A 261-amino-acid chain; its full sequence is 3-hydroxyacyl-CoA dehydrogenase type-2 (261 aa).

An N-acetylalanine modification is found at Ala-2. Positions 20, 22, and 41 each coordinate NAD(+). Residue Lys-53 is modified to N6-acetyllysine; alternate. The residue at position 53 (Lys-53) is an N6-succinyllysine; alternate. NAD(+)-binding residues include Asp-64 and Val-65. Lys-69 is modified (N6-acetyllysine). Cys-91 is an NAD(+) binding site. An N6-acetyllysine mark is found at Lys-99 and Lys-105. Ser-155 is a substrate binding site. NAD(+) contacts are provided by Tyr-168, Lys-172, Phe-201, and Thr-203. Residue Tyr-168 is the Proton acceptor of the active site. An N6-acetyllysine; alternate modification is found at Lys-212. An N6-succinyllysine; alternate modification is found at Lys-212.

Belongs to the short-chain dehydrogenases/reductases (SDR) family. Homotetramer. Component of mitochondrial ribonuclease P, a complex composed of TRMT10C/MRPP1, HSD17B10/MRPP2 and PRORP/MRPP3. Interacts with TRMT10C/MRPP1; forming the MRPP1-MRPP2 subcomplex of the mitochondrial ribonuclease P complex.

The protein resides in the mitochondrion. Its subcellular location is the mitochondrion matrix. The protein localises to the mitochondrion nucleoid. It carries out the reaction a (3S)-3-hydroxyacyl-CoA + NAD(+) = a 3-oxoacyl-CoA + NADH + H(+). It catalyses the reaction (2S,3S)-3-hydroxy-2-methylbutanoyl-CoA + NAD(+) = 2-methyl-3-oxobutanoyl-CoA + NADH + H(+). The catalysed reaction is testosterone + NAD(+) = androst-4-ene-3,17-dione + NADH + H(+). The enzyme catalyses 5alpha-androstane-3alpha,17beta-diol + NAD(+) = 17beta-hydroxy-5alpha-androstan-3-one + NADH + H(+). It carries out the reaction 17beta-estradiol + NAD(+) = estrone + NADH + H(+). It catalyses the reaction cholate + NAD(+) = 3alpha,12alpha-dihydroxy-7-oxo-5beta-cholanate + NADH + H(+). The catalysed reaction is (3S)-3-hydroxybutanoyl-CoA + NAD(+) = acetoacetyl-CoA + NADH + H(+). The enzyme catalyses (3S)-hydroxyoctanoyl-CoA + NAD(+) = 3-oxooctanoyl-CoA + NADH + H(+). It carries out the reaction (3S)-hydroxyhexadecanoyl-CoA + NAD(+) = 3-oxohexadecanoyl-CoA + NADH + H(+). It catalyses the reaction 17beta-hydroxy-5alpha-androstan-3-one + NAD(+) = 5alpha-androstan-3,17-dione + NADH + H(+). The catalysed reaction is 5alpha-pregnan-20beta-ol-3-one + NAD(+) = 5alpha-pregnane-3,20-dione + NADH + H(+). The enzyme catalyses 3alpha-hydroxy-5alpha-pregnan-20-one + NAD(+) = 5alpha-pregnane-3,20-dione + NADH + H(+). It carries out the reaction cortisone + NAD(+) = 17alpha-hydroxypregn-4-en-3,11,20-trione-21-al + NADH + H(+). It catalyses the reaction 11-dehydrocorticosterone + NAD(+) = pregn-4-ene-3,11,20,21-tetraone + NADH + H(+). The catalysed reaction is cortisol + NAD(+) = 11beta,17alpha-dihydroxypregn-4-ene-3,20,21-trione + NADH + H(+). The enzyme catalyses chenodeoxycholate + NAD(+) = 7-oxolithocholate + NADH + H(+). It carries out the reaction ursodeoxycholate + NAD(+) = 7-oxolithocholate + NADH + H(+). It catalyses the reaction 3beta,7beta-dihydroxy-5beta-cholan-24-oate + NAD(+) = 3beta-hydroxy-7-oxo-5beta-cholan-24-oate + NADH + H(+). It functions in the pathway amino-acid degradation; L-isoleucine degradation. The protein operates within lipid metabolism; fatty acid beta-oxidation. Its pathway is steroid metabolism. It participates in lipid metabolism; bile acid biosynthesis. Its function is as follows. Mitochondrial dehydrogenase involved in pathways of fatty acid, branched-chain amino acid and steroid metabolism. Acts as (S)-3-hydroxyacyl-CoA dehydrogenase in mitochondrial fatty acid beta-oxidation, a major degradation pathway of fatty acids. Catalyzes the third step in the beta-oxidation cycle, namely the reversible conversion of (S)-3-hydroxyacyl-CoA to 3-ketoacyl-CoA. Preferentially accepts straight medium- and short-chain acyl-CoA substrates with highest efficiency for (3S)-hydroxybutanoyl-CoA. Acts as 3-hydroxy-2-methylbutyryl-CoA dehydrogenase in branched-chain amino acid catabolic pathway. Catalyzes the oxidation of 3-hydroxy-2-methylbutanoyl-CoA into 2-methyl-3-oxobutanoyl-CoA, a step in isoleucine degradation pathway. Has hydroxysteroid dehydrogenase activity toward steroid hormones and bile acids. Catalyzes the oxidation of 3alpha-, 17beta-, 20beta- and 21-hydroxysteroids and 7alpha- and 7beta-hydroxy bile acids. Oxidizes allopregnanolone/brexanolone at the 3alpha-hydroxyl group, which is known to be critical for the activation of gamma-aminobutyric acid receptors (GABAARs) chloride channel. Has phospholipase C-like activity toward cardiolipin and its oxidized species. Likely oxidizes the 2'-hydroxyl in the head group of cardiolipin to form a ketone intermediate that undergoes nucleophilic attack by water and fragments into diacylglycerol, dihydroxyacetone and orthophosphate. Has higher affinity for cardiolipin with oxidized fatty acids and may degrade these species during the oxidative stress response to protect cells from apoptosis. By interacting with intracellular amyloid-beta, it may contribute to the neuronal dysfunction associated with Alzheimer disease (AD). Essential for structural and functional integrity of mitochondria. In addition to mitochondrial dehydrogenase activity, moonlights as a component of mitochondrial ribonuclease P, a complex that cleaves tRNA molecules in their 5'-ends. Together with TRMT10C/MRPP1, forms a subcomplex of the mitochondrial ribonuclease P, named MRPP1-MRPP2 subcomplex, which displays functions that are independent of the ribonuclease P activity. The MRPP1-MRPP2 subcomplex catalyzes the formation of N(1)-methylguanine and N(1)-methyladenine at position 9 (m1G9 and m1A9, respectively) in tRNAs; HSD17B10/MRPP2 acting as a non-catalytic subunit. The MRPP1-MRPP2 subcomplex also acts as a tRNA maturation platform: following 5'-end cleavage by the mitochondrial ribonuclease P complex, the MRPP1-MRPP2 subcomplex enhances the efficiency of 3'-processing catalyzed by ELAC2, retains the tRNA product after ELAC2 processing and presents the nascent tRNA to the mitochondrial CCA tRNA nucleotidyltransferase TRNT1 enzyme. Associates with mitochondrial DNA complexes at the nucleoids to initiate RNA processing and ribosome assembly. In Bos taurus (Bovine), this protein is 3-hydroxyacyl-CoA dehydrogenase type-2 (HSD17B10).